The following is a 1484-amino-acid chain: DNA-directed RNA polymerase subunit beta' (1484 aa).

4 residues coordinate Zn(2+): Cys67, Cys69, Cys82, and Cys85. Mg(2+)-binding residues include Asp499, Asp501, and Asp503. Positions 867, 943, 950, and 953 each coordinate Zn(2+).

This sequence belongs to the RNA polymerase beta' chain family. The RNAP catalytic core consists of 2 alpha, 1 beta, 1 beta' and 1 omega subunit. When a sigma factor is associated with the core the holoenzyme is formed, which can initiate transcription. The cofactor is Mg(2+). It depends on Zn(2+) as a cofactor.

The enzyme catalyses RNA(n) + a ribonucleoside 5'-triphosphate = RNA(n+1) + diphosphate. Functionally, DNA-dependent RNA polymerase catalyzes the transcription of DNA into RNA using the four ribonucleoside triphosphates as substrates. This Chlorobium phaeovibrioides (strain DSM 265 / 1930) (Prosthecochloris vibrioformis (strain DSM 265)) protein is DNA-directed RNA polymerase subunit beta'.